We begin with the raw amino-acid sequence, 240 residues long: Uridylate kinase (240 aa).

13–16 (KISG) provides a ligand contact to ATP. Residue glycine 55 participates in UMP binding. Positions 56 and 60 each coordinate ATP. UMP is bound by residues aspartate 75 and 136 to 143 (TGNPFFTT). ATP-binding residues include threonine 163, glutamine 164, tyrosine 169, and aspartate 172.

This sequence belongs to the UMP kinase family. As to quaternary structure, homohexamer.

It is found in the cytoplasm. It carries out the reaction UMP + ATP = UDP + ADP. It functions in the pathway pyrimidine metabolism; CTP biosynthesis via de novo pathway; UDP from UMP (UMPK route): step 1/1. Its activity is regulated as follows. Inhibited by UTP. Its function is as follows. Catalyzes the reversible phosphorylation of UMP to UDP. The polypeptide is Uridylate kinase (Paramagnetospirillum magneticum (strain ATCC 700264 / AMB-1) (Magnetospirillum magneticum)).